Here is a 489-residue protein sequence, read N- to C-terminus: Glycogen synthase (489 aa).

Residue arginine 20 participates in ADP-alpha-D-glucose binding.

It belongs to the glycosyltransferase 1 family. Bacterial/plant glycogen synthase subfamily.

It catalyses the reaction [(1-&gt;4)-alpha-D-glucosyl](n) + ADP-alpha-D-glucose = [(1-&gt;4)-alpha-D-glucosyl](n+1) + ADP + H(+). It participates in glycan biosynthesis; glycogen biosynthesis. Its function is as follows. Synthesizes alpha-1,4-glucan chains using ADP-glucose. This is Glycogen synthase from Chlorobium limicola (strain DSM 245 / NBRC 103803 / 6330).